The following is a 454-amino-acid chain: Aminodeoxychorismate synthase component 1 (454 aa).

L-tryptophan is bound by residues Ser37, 44–47 (YNRF), and 241–243 (PFS). Glu259 (proton donor) is an active-site residue. The active-site N6-(4-deoxychorismate)-lysine intermediate is Lys275.

The protein belongs to the anthranilate synthase component I family. As to quaternary structure, monomer. Heterodimer consisting of two non-identical subunits: a glutamine amidotransferase subunit (PabA) and a aminodeoxychorismate synthase subunit (PabB). The cofactor is Mg(2+).

The catalysed reaction is chorismate + L-glutamine = 4-amino-4-deoxychorismate + L-glutamate. The protein operates within cofactor biosynthesis; tetrahydrofolate biosynthesis; 4-aminobenzoate from chorismate: step 1/2. Functionally, part of a heterodimeric complex that catalyzes the two-step biosynthesis of 4-amino-4-deoxychorismate (ADC), a precursor of p-aminobenzoate (PABA) and tetrahydrofolate. In the first step, a glutamine amidotransferase (PabA) generates ammonia as a substrate that, along with chorismate, is used in the second step, catalyzed by aminodeoxychorismate synthase (PabB) to produce ADC. This Salmonella typhimurium (strain LT2 / SGSC1412 / ATCC 700720) protein is Aminodeoxychorismate synthase component 1 (pabB).